The sequence spans 406 residues: Phosphopentomutase (406 aa).

The Mn(2+) site is built by Asp-10, Asp-305, His-310, Asp-346, His-347, and His-358.

The protein belongs to the phosphopentomutase family. It depends on Mn(2+) as a cofactor.

The protein localises to the cytoplasm. The enzyme catalyses 2-deoxy-alpha-D-ribose 1-phosphate = 2-deoxy-D-ribose 5-phosphate. The catalysed reaction is alpha-D-ribose 1-phosphate = D-ribose 5-phosphate. It participates in carbohydrate degradation; 2-deoxy-D-ribose 1-phosphate degradation; D-glyceraldehyde 3-phosphate and acetaldehyde from 2-deoxy-alpha-D-ribose 1-phosphate: step 1/2. Its function is as follows. Isomerase that catalyzes the conversion of deoxy-ribose 1-phosphate (dRib-1-P) and ribose 1-phosphate (Rib-1-P) to deoxy-ribose 5-phosphate (dRib-5-P) and ribose 5-phosphate (Rib-5-P), respectively. In Sinorhizobium medicae (strain WSM419) (Ensifer medicae), this protein is Phosphopentomutase.